Here is a 473-residue protein sequence, read N- to C-terminus: tRNA modification GTPase MnmE (473 aa).

The (6S)-5-formyl-5,6,7,8-tetrahydrofolate site is built by Arg-31, Glu-95, and Arg-134. Residues 230–394 (GVSTVIAGKP…LKQHMGDLVK (165 aa)) enclose the TrmE-type G domain. GTP contacts are provided by residues 240-245 (NAGKST), 259-265 (SHMPGTT), and 284-287 (DTAG). The Mg(2+) site is built by Ser-244 and Thr-265. Lys-473 contacts (6S)-5-formyl-5,6,7,8-tetrahydrofolate.

Belongs to the TRAFAC class TrmE-Era-EngA-EngB-Septin-like GTPase superfamily. TrmE GTPase family. In terms of assembly, homodimer. Heterotetramer of two MnmE and two MnmG subunits. The cofactor is K(+).

The protein resides in the cytoplasm. Its function is as follows. Exhibits a very high intrinsic GTPase hydrolysis rate. Involved in the addition of a carboxymethylaminomethyl (cmnm) group at the wobble position (U34) of certain tRNAs, forming tRNA-cmnm(5)s(2)U34. This chain is tRNA modification GTPase MnmE, found in Chlorobaculum tepidum (strain ATCC 49652 / DSM 12025 / NBRC 103806 / TLS) (Chlorobium tepidum).